The chain runs to 323 residues: rRNA 2'-O-methyltransferase fibrillarin (323 aa).

Positions 1 to 78 (MRPGFSPRGG…GGGRGGFGGG (78 aa)) are disordered. 2 stretches are compositionally biased toward gly residues: residues 7–44 (PRGG…GGRG) and 63–78 (GRGG…FGGG). Arg8, Arg17, Arg23, and Arg29 each carry asymmetric dimethylarginine. S-adenosyl-L-methionine is bound by residues 174–175 (TT), 193–194 (EF), 218–219 (DA), and 238–241 (DVAQ). Positions 276-308 (APEAVFAAEVKKMQQENMKPQEQLTLEPYERDH) are helical.

This sequence belongs to the methyltransferase superfamily. Fibrillarin family. Component of box C/D small nucleolar ribonucleoprotein (snoRNP) particles. Part of the small subunit (SSU) processome, composed of more than 70 proteins and the RNA chaperone small nucleolar RNA (snoRNA) U3. By homology to other fibrillarins, some or all of the N-terminal domain arginines are modified to asymmetric dimethylarginine (DMA).

The protein localises to the nucleus. It localises to the nucleolus. It is found in the nucleoplasm. It catalyses the reaction L-glutaminyl-[histone H2A] + S-adenosyl-L-methionine = N(5)-methyl-L-glutaminyl-[histone H2A] + S-adenosyl-L-homocysteine + H(+). It carries out the reaction a ribonucleotide in rRNA + S-adenosyl-L-methionine = a 2'-O-methylribonucleotide in rRNA + S-adenosyl-L-homocysteine + H(+). The catalysed reaction is a ribonucleotide in U6 snRNA + S-adenosyl-L-methionine = a 2'-O-methylribonucleotide in U6 snRNA + S-adenosyl-L-homocysteine + H(+). In terms of biological role, S-adenosyl-L-methionine-dependent methyltransferase that has the ability to methylate both RNAs and proteins. Involved in pre-rRNA processing by catalyzing the site-specific 2'-hydroxyl methylation of ribose moieties in pre-ribosomal RNA. Probably catalyzes 2'-O-methylation of U6 snRNAs in box C/D RNP complexes. U6 snRNA 2'-O-methylation is required for mRNA splicing fidelity. Also acts as a protein methyltransferase by mediating methylation of 'Gln-105' of histone H2A (H2AQ104me), a modification that impairs binding of the FACT complex and is specifically present at 35S ribosomal DNA locus. Part of the small subunit (SSU) processome, first precursor of the small eukaryotic ribosomal subunit. During the assembly of the SSU processome in the nucleolus, many ribosome biogenesis factors, an RNA chaperone and ribosomal proteins associate with the nascent pre-rRNA and work in concert to generate RNA folding, modifications, rearrangements and cleavage as well as targeted degradation of pre-ribosomal RNA by the RNA exosome. The protein is rRNA 2'-O-methyltransferase fibrillarin (fbl) of Xenopus laevis (African clawed frog).